The primary structure comprises 321 residues: Phospho-N-acetylmuramoyl-pentapeptide-transferase (321 aa).

The next 10 helical transmembrane spans lie at 1–21, 50–70, 76–96, 112–132, 140–160, 176–196, 200–220, 225–245, 250–270, and 300–320; these read MIFV…PVLI, MGGL…IIFV, IILL…DDYI, FLAQ…FHLV, IPFT…IVFL, GLAT…SFVL, AIGI…PYNI, VFMG…ISIM, LSLI…MLQV, and VVTV…WIGV.

This sequence belongs to the glycosyltransferase 4 family. MraY subfamily. It depends on Mg(2+) as a cofactor.

It is found in the cell membrane. It carries out the reaction UDP-N-acetyl-alpha-D-muramoyl-L-alanyl-gamma-D-glutamyl-L-lysyl-D-alanyl-D-alanine + di-trans,octa-cis-undecaprenyl phosphate = Mur2Ac(oyl-L-Ala-gamma-D-Glu-L-Lys-D-Ala-D-Ala)-di-trans,octa-cis-undecaprenyl diphosphate + UMP. The protein operates within cell wall biogenesis; peptidoglycan biosynthesis. Its function is as follows. Catalyzes the initial step of the lipid cycle reactions in the biosynthesis of the cell wall peptidoglycan: transfers peptidoglycan precursor phospho-MurNAc-pentapeptide from UDP-MurNAc-pentapeptide onto the lipid carrier undecaprenyl phosphate, yielding undecaprenyl-pyrophosphoryl-MurNAc-pentapeptide, known as lipid I. This Staphylococcus aureus (strain bovine RF122 / ET3-1) protein is Phospho-N-acetylmuramoyl-pentapeptide-transferase.